The chain runs to 370 residues: N-acetyldiaminopimelate deacetylase (370 aa).

D67 is an active-site residue. The Proton acceptor role is filled by E126.

The protein belongs to the peptidase M20A family. N-acetyldiaminopimelate deacetylase subfamily.

It catalyses the reaction N-acetyl-(2S,6S)-2,6-diaminopimelate + H2O = (2S,6S)-2,6-diaminopimelate + acetate. It functions in the pathway amino-acid biosynthesis; L-lysine biosynthesis via DAP pathway; LL-2,6-diaminopimelate from (S)-tetrahydrodipicolinate (acetylase route): step 3/3. In terms of biological role, catalyzes the conversion of N-acetyl-diaminopimelate to diaminopimelate and acetate. This chain is N-acetyldiaminopimelate deacetylase, found in Exiguobacterium sibiricum (strain DSM 17290 / CCUG 55495 / CIP 109462 / JCM 13490 / 255-15).